The sequence spans 574 residues: Sulfate adenylyltransferase (574 aa).

An N-terminal region spans residues 1 to 169 (MANTPHGGVL…IEAVNKLNHY (169 aa)). The interval 170–394 (DYVALRYTPA…LRESNPPRAS (225 aa)) is catalytic. Gln-197 provides a ligand contact to sulfate. ATP contacts are provided by residues 197–200 (QTRN) and 291–294 (GRDH). Residues Thr-198, Arg-199, and Asn-200 contribute to the active site. Arg-199 serves as a coordination point for sulfate. Residue Ala-295 participates in sulfate binding. Val-333 contacts ATP. Positions 395-574 (QGFTIFLTGY…LESEGYFERL (180 aa)) are allosteric regulation domain; adenylyl-sulfate kinase-like. Residues 434-437 (DTVR), Arg-451, 477-478 (IA), and Arg-516 contribute to the 3'-phosphoadenylyl sulfate site.

The protein in the N-terminal section; belongs to the sulfate adenylyltransferase family. It in the C-terminal section; belongs to the APS kinase family. As to quaternary structure, homohexamer. Dimer of trimers.

It localises to the cytoplasm. The enzyme catalyses sulfate + ATP + H(+) = adenosine 5'-phosphosulfate + diphosphate. The protein operates within sulfur metabolism; hydrogen sulfide biosynthesis; sulfite from sulfate: step 1/3. Allosterically inhibited by 3'-phosphoadenosine 5'-phosphosulfate (PAPS). Its function is as follows. Catalyzes the first intracellular reaction of sulfate assimilation, forming adenosine-5'-phosphosulfate (APS) from inorganic sulfate and ATP. Plays an important role in sulfate activation as a component of the biosynthesis pathway of sulfur-containing amino acids. The protein is Sulfate adenylyltransferase of Aspergillus niger.